A 294-amino-acid polypeptide reads, in one-letter code: 4-hydroxy-tetrahydrodipicolinate synthase (294 aa).

Thr-47 contributes to the pyruvate binding site. The Proton donor/acceptor role is filled by Tyr-135. The active-site Schiff-base intermediate with substrate is Lys-163. Position 205 (Ile-205) interacts with pyruvate.

Belongs to the DapA family. As to quaternary structure, homotetramer; dimer of dimers.

Its subcellular location is the cytoplasm. It carries out the reaction L-aspartate 4-semialdehyde + pyruvate = (2S,4S)-4-hydroxy-2,3,4,5-tetrahydrodipicolinate + H2O + H(+). The protein operates within amino-acid biosynthesis; L-lysine biosynthesis via DAP pathway; (S)-tetrahydrodipicolinate from L-aspartate: step 3/4. Functionally, catalyzes the condensation of (S)-aspartate-beta-semialdehyde [(S)-ASA] and pyruvate to 4-hydroxy-tetrahydrodipicolinate (HTPA). The polypeptide is 4-hydroxy-tetrahydrodipicolinate synthase (Rickettsia prowazekii (strain Madrid E)).